Reading from the N-terminus, the 426-residue chain is Serine--tRNA ligase (426 aa).

231–233 (TLE) contacts L-serine. 262–264 (RSE) serves as a coordination point for ATP. Glu285 provides a ligand contact to L-serine. 349 to 352 (EISS) contacts ATP. An L-serine-binding site is contributed by Ser385.

Belongs to the class-II aminoacyl-tRNA synthetase family. Type-1 seryl-tRNA synthetase subfamily. In terms of assembly, homodimer. The tRNA molecule binds across the dimer.

The protein resides in the cytoplasm. It catalyses the reaction tRNA(Ser) + L-serine + ATP = L-seryl-tRNA(Ser) + AMP + diphosphate + H(+). It carries out the reaction tRNA(Sec) + L-serine + ATP = L-seryl-tRNA(Sec) + AMP + diphosphate + H(+). It functions in the pathway aminoacyl-tRNA biosynthesis; selenocysteinyl-tRNA(Sec) biosynthesis; L-seryl-tRNA(Sec) from L-serine and tRNA(Sec): step 1/1. Functionally, catalyzes the attachment of serine to tRNA(Ser). Is also able to aminoacylate tRNA(Sec) with serine, to form the misacylated tRNA L-seryl-tRNA(Sec), which will be further converted into selenocysteinyl-tRNA(Sec). The sequence is that of Serine--tRNA ligase from Malacoplasma penetrans (strain HF-2) (Mycoplasma penetrans).